The following is a 350-amino-acid chain: tRNA uridine(34) hydroxylase (350 aa).

The Rhodanese domain maps to 146–240; it reads DDPEAVFVDM…YARRAREQGL (95 aa). The active-site Cysteine persulfide intermediate is C200.

It belongs to the TrhO family.

It catalyses the reaction uridine(34) in tRNA + AH2 + O2 = 5-hydroxyuridine(34) in tRNA + A + H2O. Its function is as follows. Catalyzes oxygen-dependent 5-hydroxyuridine (ho5U) modification at position 34 in tRNAs. In Erwinia tasmaniensis (strain DSM 17950 / CFBP 7177 / CIP 109463 / NCPPB 4357 / Et1/99), this protein is tRNA uridine(34) hydroxylase.